The sequence spans 88 residues: DNA-directed RNA polymerase subunit omega (88 aa).

It belongs to the RNA polymerase subunit omega family. As to quaternary structure, the RNAP catalytic core consists of 2 alpha, 1 beta, 1 beta' and 1 omega subunit. When a sigma factor is associated with the core the holoenzyme is formed, which can initiate transcription.

It carries out the reaction RNA(n) + a ribonucleoside 5'-triphosphate = RNA(n+1) + diphosphate. In terms of biological role, promotes RNA polymerase assembly. Latches the N- and C-terminal regions of the beta' subunit thereby facilitating its interaction with the beta and alpha subunits. The chain is DNA-directed RNA polymerase subunit omega from Kineococcus radiotolerans (strain ATCC BAA-149 / DSM 14245 / SRS30216).